The following is a 292-amino-acid chain: MPWLQVRLAISPEQAETYEDALLEVGAVSVTFMDAEDQPIFEPDLNTTPLWSHTHLLALFEADADPEQVFAHLRLLTGAELPEHQAEVIEDQDWERSWMDNFQPMRFGRRLWIVPSWHDAPEKDAVNLLLDPGLAFGTGTHPTTALCLEWLDGQQLEGTQVLDFGCGSGILAIAALLLGAREAVGTDIDVQAIEASRDNAQRNGIADEKLALYLPEHMPAMQADVLVANILAGPLVSLAPQLSGLVRPGGLLALSGILAEQGEDVAAAYAADFELDPIVVRDGWVRISGRRR.

S-adenosyl-L-methionine contacts are provided by Thr-144, Gly-165, Asp-187, and Asn-229.

Belongs to the methyltransferase superfamily. PrmA family.

The protein resides in the cytoplasm. The enzyme catalyses L-lysyl-[protein] + 3 S-adenosyl-L-methionine = N(6),N(6),N(6)-trimethyl-L-lysyl-[protein] + 3 S-adenosyl-L-homocysteine + 3 H(+). Methylates ribosomal protein L11. The polypeptide is Ribosomal protein L11 methyltransferase (Pseudomonas putida (strain ATCC 700007 / DSM 6899 / JCM 31910 / BCRC 17059 / LMG 24140 / F1)).